Consider the following 62-residue polypeptide: DNA gyrase inhibitor YacG (62 aa).

Cys-8, Cys-11, Cys-27, and Cys-31 together coordinate Zn(2+).

This sequence belongs to the DNA gyrase inhibitor YacG family. Interacts with GyrB. It depends on Zn(2+) as a cofactor.

Functionally, inhibits all the catalytic activities of DNA gyrase by preventing its interaction with DNA. Acts by binding directly to the C-terminal domain of GyrB, which probably disrupts DNA binding by the gyrase. In Actinobacillus pleuropneumoniae serotype 5b (strain L20), this protein is DNA gyrase inhibitor YacG.